Reading from the N-terminus, the 476-residue chain is Glycogen synthase (476 aa).

Lys15 lines the ADP-alpha-D-glucose pocket.

The protein belongs to the glycosyltransferase 1 family. Bacterial/plant glycogen synthase subfamily.

The catalysed reaction is [(1-&gt;4)-alpha-D-glucosyl](n) + ADP-alpha-D-glucose = [(1-&gt;4)-alpha-D-glucosyl](n+1) + ADP + H(+). It participates in glycan biosynthesis; glycogen biosynthesis. Functionally, synthesizes alpha-1,4-glucan chains using ADP-glucose. The protein is Glycogen synthase of Mycoplasma mobile (strain ATCC 43663 / 163K / NCTC 11711) (Mesomycoplasma mobile).